The following is a 409-amino-acid chain: SPI-1 type 3 secretion system translocon protein SctB (409 aa).

The helical transmembrane segment at 119 to 140 (ISGMSSSAVALLAAANTLMLTL) threads the bilayer. The segment covering 350–368 (ERSEQQISQVNNRVASTAS) has biased composition (polar residues). The interval 350–378 (ERSEQQISQVNNRVASTASDEARESSRKS) is disordered.

The protein belongs to the SctB/SipC family. The core secretion machinery of the T3SS is composed of approximately 20 different proteins, including cytoplasmic components, a base, an export apparatus and a needle. This subunit is involved in the formation of a pore, called the translocon, in host membrane.

The protein localises to the secreted. Its subcellular location is the host membrane. Component of the type III secretion system 1 (SPI-1 T3SS), also called injectisome, which is used to inject bacterial effector proteins into eukaryotic host cells. SipB/SctE1 and SipC/SctB1 are inserted into the host membrane where they form a pore and allow the translocation of effector proteins into the cytosol of target cells. This chain is SPI-1 type 3 secretion system translocon protein SctB, found in Salmonella typhi.